The primary structure comprises 511 residues: Sodium/hydrogen exchanger 9B1 (511 aa).

Residues 1 to 10 show a composition bias toward basic and acidic residues; the sequence is MHTTESKDEH. The tract at residues 1 to 41 is disordered; sequence MHTTESKDEHLEDENFQTSTTPQSLIDPNSTAHEETKTVIS. The span at 16 to 31 shows a compositional bias: polar residues; sequence FQTSTTPQSLIDPNST. 13 helical membrane passes run 67–87, 95–115, 116–136, 152–172, 187–207, 215–235, 260–280, 284–304, 337–357, 368–388, 398–418, 431–451, and 472–492; these read IITNGVILFVIWCTTWSVLGS, LFGLLIIFCSAIIGGKILQLI, RIPLVPPLPPLLGMLLAGFTI, WSSILRSTALTVILIRAGLGL, LAVGPCLMEASAAAVFSHFIM, FLLGFVLGAVSPAIVVPSMMV, VLAITGFNTCLSIVFSSGGIV, IASIKSVSISLLAGIVLGFFV, IGLHGTGGLFTLVLSFIAGTK, IITNVWDIFQPLLFGLVGAEV, IGIFVATLSLALCVRILVTYI, IFIALAWMPKATVQAVLGPLV, and VAFLAILITAPNGALLMGILG.

It belongs to the monovalent cation:proton antiporter 1 (CPA1) transporter (TC 2.A.36) family.

It localises to the cell projection. Its subcellular location is the cilium. The protein localises to the flagellum membrane. Functionally, sperm-specific Na(+)/H(+) exchanger involved in intracellular pH regulation of spermatozoa. Involved in sperm motility and fertility. The polypeptide is Sodium/hydrogen exchanger 9B1 (SLC9B1) (Macaca fascicularis (Crab-eating macaque)).